The primary structure comprises 302 residues: uncharacterized protein (302 aa).

Residues 1–22 form the signal peptide; that stretch reads MLVVFKRLGFIVSIFSLTFLSA. Cysteine 23 carries N-palmitoyl cysteine lipidation. Residue cysteine 23 is the site of S-diacylglycerol cysteine attachment.

Belongs to the MG067/MG068/MG395 family.

Its subcellular location is the cell membrane. This is an uncharacterized protein from Mycoplasma pneumoniae (strain ATCC 29342 / M129 / Subtype 1) (Mycoplasmoides pneumoniae).